Reading from the N-terminus, the 456-residue chain is UDP-N-acetylglucosamine 1-carboxyvinyltransferase (456 aa).

34 to 35 (KN) serves as a coordination point for phosphoenolpyruvate. A UDP-N-acetyl-alpha-D-glucosamine-binding site is contributed by arginine 104. Cysteine 128 acts as the Proton donor in catalysis. 2-(S-cysteinyl)pyruvic acid O-phosphothioketal is present on cysteine 128. Residues aspartate 319 and isoleucine 341 each coordinate UDP-N-acetyl-alpha-D-glucosamine.

It belongs to the EPSP synthase family. MurA subfamily.

It localises to the cytoplasm. The catalysed reaction is phosphoenolpyruvate + UDP-N-acetyl-alpha-D-glucosamine = UDP-N-acetyl-3-O-(1-carboxyvinyl)-alpha-D-glucosamine + phosphate. It functions in the pathway cell wall biogenesis; peptidoglycan biosynthesis. In terms of biological role, cell wall formation. Adds enolpyruvyl to UDP-N-acetylglucosamine. This is UDP-N-acetylglucosamine 1-carboxyvinyltransferase from Prochlorococcus marinus (strain MIT 9301).